We begin with the raw amino-acid sequence, 891 residues long: Kinesin-like protein KIN-UB (891 aa).

The tract at residues 1-54 is disordered; it reads MSGKVANATPKAAAGKPRLSAAGGGAYRRTSSGPLPSAGGGGGRASSESGVSSR. A compositionally biased stretch (low complexity) spans 45 to 54; the sequence is ASSESGVSSR. The region spanning 54 to 400 is the Kinesin motor domain; the sequence is RVRVAVRLRP…IMFGQRAMKV (347 aa). 139-146 contacts ATP; sequence GQTGTGKT. The D-BOX signature appears at 370-378; that stretch reads RTSLVVTIG. A coiled-coil region spans residues 502-592; the sequence is TSSEVGEVQN…ADETRRSLDR (91 aa). A compositionally biased stretch (basic and acidic residues) spans 586-595; it reads TRRSLDRGDG. A disordered region spans residues 586–626; that stretch reads TRRSLDRGDGSGKIFPGFDSLMSHSRNSQPREQSNGPKPPI. The segment covering 607–621 has biased composition (polar residues); that stretch reads MSHSRNSQPREQSNG. ARM repeat units lie at residues 623 to 662, 664 to 704, 706 to 746, and 748 to 787; these read KPPIAKLFEQVGLQKILSLLESEEPDVRVHAVKVVANLAA, EANQ…NLAM, ETNQ…NLCG, and DKLQTRLRGEGGIKALLGMVKCGHPDVLAQVARGIANFAK.

The protein belongs to the TRAFAC class myosin-kinesin ATPase superfamily. Kinesin family. Ungrouped subfamily.

The protein resides in the cytoplasm. The protein localises to the cytoskeleton. This is Kinesin-like protein KIN-UB from Oryza sativa subsp. japonica (Rice).